The sequence spans 829 residues: Ectonucleotide pyrophosphatase/phosphodiesterase C27A7.1 (829 aa).

The helical; Signal-anchor for type II membrane protein transmembrane segment at 54 to 74 threads the bilayer; it reads VIGIAVLLLAMVVIVVIVLLL. Residue T224 is the Nucleophile of the active site. Residues N296, N424, N514, N542, N582, N649, N733, and N748 are each glycosylated (N-linked (GlcNAc...) asparagine). A disulfide bridge links C439 with C782.

It belongs to the nucleotide pyrophosphatase/phosphodiesterase family.

The protein localises to the membrane. Its function is as follows. Probable phosphodiesterase. The chain is Ectonucleotide pyrophosphatase/phosphodiesterase C27A7.1 from Caenorhabditis elegans.